A 539-amino-acid chain; its full sequence is Sphingosine-1-phosphate lyase (539 aa).

Residues 1–46 (MELAMDFALRLRDAANHHLSRYEPLVLLAAPLLALLAARTLHAAAA) form the signal peptide. The Lumenal segment spans residues 47–54 (AVADRGLR). The helical transmembrane segment at 55 to 75 (TVLLALAMTAIKLLPGVSAYI) threads the bilayer. Residues 76-539 (NAEKRKVVDQ…LLVEFMDASC (464 aa)) are Cytoplasmic-facing. Lys344 carries the post-translational modification N6-(pyridoxal phosphate)lysine.

The protein belongs to the group II decarboxylase family. Sphingosine-1-phosphate lyase subfamily. Requires pyridoxal 5'-phosphate as cofactor.

The protein localises to the endoplasmic reticulum membrane. The catalysed reaction is sphinganine 1-phosphate = hexadecanal + phosphoethanolamine. It participates in lipid metabolism; sphingolipid metabolism. Its function is as follows. Cleaves phosphorylated sphingoid bases (PSBs), such as sphingosine-1-phosphate, into fatty aldehydes and phosphoethanolamine. Elevates stress-induced ceramide production and apoptosis. The polypeptide is Sphingosine-1-phosphate lyase (SPL) (Oryza sativa subsp. japonica (Rice)).